Here is a 288-residue protein sequence, read N- to C-terminus: Formamidopyrimidine-DNA glycosylase (288 aa).

P2 acts as the Schiff-base intermediate with DNA in catalysis. E3 serves as the catalytic Proton donor. Residue K58 is the Proton donor; for beta-elimination activity of the active site. DNA-binding residues include H101, R124, and R169. An FPG-type zinc finger spans residues 254–288; it reads LVYDRAGLPCRVCGTPIRQIVQGQRSTFYCPACQR. R278 (proton donor; for delta-elimination activity) is an active-site residue.

This sequence belongs to the FPG family. Monomer. The cofactor is Zn(2+).

It catalyses the reaction Hydrolysis of DNA containing ring-opened 7-methylguanine residues, releasing 2,6-diamino-4-hydroxy-5-(N-methyl)formamidopyrimidine.. The enzyme catalyses 2'-deoxyribonucleotide-(2'-deoxyribose 5'-phosphate)-2'-deoxyribonucleotide-DNA = a 3'-end 2'-deoxyribonucleotide-(2,3-dehydro-2,3-deoxyribose 5'-phosphate)-DNA + a 5'-end 5'-phospho-2'-deoxyribonucleoside-DNA + H(+). Its function is as follows. Involved in base excision repair of DNA damaged by oxidation or by mutagenic agents. Acts as a DNA glycosylase that recognizes and removes damaged bases. Has a preference for oxidized purines, such as 7,8-dihydro-8-oxoguanine (8-oxoG). Has AP (apurinic/apyrimidinic) lyase activity and introduces nicks in the DNA strand. Cleaves the DNA backbone by beta-delta elimination to generate a single-strand break at the site of the removed base with both 3'- and 5'-phosphates. This is Formamidopyrimidine-DNA glycosylase from Ralstonia nicotianae (strain ATCC BAA-1114 / GMI1000) (Ralstonia solanacearum).